The sequence spans 105 residues: DNA-directed RNA polymerase subunit omega (105 aa).

Belongs to the RNA polymerase subunit omega family. As to quaternary structure, the RNAP catalytic core consists of 2 alpha, 1 beta, 1 beta' and 1 omega subunit. When a sigma factor is associated with the core the holoenzyme is formed, which can initiate transcription.

It carries out the reaction RNA(n) + a ribonucleoside 5'-triphosphate = RNA(n+1) + diphosphate. Promotes RNA polymerase assembly. Latches the N- and C-terminal regions of the beta' subunit thereby facilitating its interaction with the beta and alpha subunits. In Streptococcus mutans serotype c (strain ATCC 700610 / UA159), this protein is DNA-directed RNA polymerase subunit omega.